Here is a 160-residue protein sequence, read N- to C-terminus: Sec-independent protein translocase protein TatB (160 aa).

A helical membrane pass occupies residues 1-21 (MIDLGVSKIALIGAVALIVIG). Disordered regions lie at residues 70–100 (ARDVETSIQTSASDFEKSWSDATGSDASTAT) and 133–160 (RSGVRTKAQSGAARVARFRPQSGRSSSF). Residues 89-100 (SDATGSDASTAT) show a composition bias toward polar residues.

It belongs to the TatB family. In terms of assembly, the Tat system comprises two distinct complexes: a TatABC complex, containing multiple copies of TatA, TatB and TatC subunits, and a separate TatA complex, containing only TatA subunits. Substrates initially bind to the TatABC complex, which probably triggers association of the separate TatA complex to form the active translocon.

Its subcellular location is the cell inner membrane. Part of the twin-arginine translocation (Tat) system that transports large folded proteins containing a characteristic twin-arginine motif in their signal peptide across membranes. Together with TatC, TatB is part of a receptor directly interacting with Tat signal peptides. TatB may form an oligomeric binding site that transiently accommodates folded Tat precursor proteins before their translocation. This is Sec-independent protein translocase protein TatB from Polaromonas sp. (strain JS666 / ATCC BAA-500).